The following is a 37-amino-acid chain: Large ribosomal subunit protein bL36 (37 aa).

This sequence belongs to the bacterial ribosomal protein bL36 family.

In Metamycoplasma arthritidis (strain 158L3-1) (Mycoplasma arthritidis), this protein is Large ribosomal subunit protein bL36.